Reading from the N-terminus, the 79-residue chain is UPF0180 protein Bcer98_1118 (79 aa).

This sequence belongs to the UPF0180 family.

The polypeptide is UPF0180 protein Bcer98_1118 (Bacillus cytotoxicus (strain DSM 22905 / CIP 110041 / 391-98 / NVH 391-98)).